A 474-amino-acid chain; its full sequence is Probable CAAX prenyl protease 1 (474 aa).

3 helical membrane-spanning segments follow: residues 103-123 (SWFS…IIKY), 196-216 (IFVI…SVVV), and 230-250 (FIMY…TIAP). Position 332 (His-332) interacts with Zn(2+). Glu-333 is a catalytic residue. His-336 provides a ligand contact to Zn(2+). 2 consecutive transmembrane segments (helical) span residues 344–364 (INTI…AAFI) and 381–401 (VIVG…ILTF). Glu-411 lines the Zn(2+) pocket. The active-site Proton donor is the Asp-415.

It belongs to the peptidase M48A family. Requires Zn(2+) as cofactor.

The protein resides in the endoplasmic reticulum membrane. It catalyses the reaction Hydrolyzes the peptide bond -P2-(S-farnesyl or geranylgeranyl)C-P1'-P2'-P3'-COOH where P1' and P2' are amino acids with aliphatic side chains and P3' is any C-terminal residue.. Its function is as follows. Proteolytically removes the C-terminal three residues of farnesylated proteins. The protein is Probable CAAX prenyl protease 1 of Schizosaccharomyces pombe (strain 972 / ATCC 24843) (Fission yeast).